A 145-amino-acid chain; its full sequence is uncharacterized protein (145 aa).

The segment at Gly-37–Pro-123 is disordered. Residues Lys-38–Gln-63 are compositionally biased toward polar residues.

This is an uncharacterized protein from Caenorhabditis elegans.